The primary structure comprises 1202 residues: Caffeine-induced protein 16 (1202 aa).

Residues 1105-1159 (NIALLLRGFFCYYGLTTQYSFDWEAYMIDISSSQLKRKSTEFKDCPFVVLDPFLK) enclose the PAP-associated domain.

The sequence is that of Caffeine-induced protein 16 (cid16) from Schizosaccharomyces pombe (strain 972 / ATCC 24843) (Fission yeast).